We begin with the raw amino-acid sequence, 107 residues long: Iron-binding protein IscA (107 aa).

Residues cysteine 35, cysteine 99, and cysteine 101 each coordinate Fe cation.

Belongs to the HesB/IscA family. In terms of assembly, homodimer; may form tetramers and higher multimers. Fe cation serves as cofactor.

Is able to transfer iron-sulfur clusters to apo-ferredoxin. Multiple cycles of [2Fe2S] cluster formation and transfer are observed, suggesting that IscA acts catalytically. Recruits intracellular free iron so as to provide iron for the assembly of transient iron-sulfur cluster in IscU in the presence of IscS, L-cysteine and the thioredoxin reductase system TrxA/TrxB. The sequence is that of Iron-binding protein IscA from Yersinia enterocolitica serotype O:8 / biotype 1B (strain NCTC 13174 / 8081).